We begin with the raw amino-acid sequence, 333 residues long: 3-isopropylmalate/3-methylmalate dehydrogenase (333 aa).

Substrate is bound by residues arginine 81, arginine 91, arginine 112, and aspartate 203. Residues aspartate 203, aspartate 227, and aspartate 231 each contribute to the Mg(2+) site. An NAD(+)-binding site is contributed by 260–272; that stretch reads GSAPDIAGKKIAN.

Belongs to the isocitrate and isopropylmalate dehydrogenases family. Homotetramer. Mg(2+) is required as a cofactor. Requires Mn(2+) as cofactor.

It localises to the cytoplasm. It catalyses the reaction (2R,3S)-3-isopropylmalate + NAD(+) = 4-methyl-2-oxopentanoate + CO2 + NADH. The enzyme catalyses (2R,3S)-3-methylmalate + NAD(+) = 2-oxobutanoate + CO2 + NADH. The catalysed reaction is (R)-malate + NAD(+) = pyruvate + CO2 + NADH. It participates in amino-acid biosynthesis; L-leucine biosynthesis; L-leucine from 3-methyl-2-oxobutanoate: step 3/4. Its pathway is amino-acid biosynthesis; L-isoleucine biosynthesis; 2-oxobutanoate from pyruvate: step 3/3. In terms of biological role, catalyzes the oxidation of 3-carboxy-2-hydroxy-4-methylpentanoate (3-isopropylmalate) to 3-carboxy-4-methyl-2-oxopentanoate, which decarboxylates to 4-methyl-2-oxopentanoate (2-oxoisocaproate). Also catalyzes the oxidative decarboxylation of 3-methylmalate to 2-oxobutyrate, and that of D-malate to pyruvate. Cannot use NADP(+) instead of NAD(+). Cannot catalyze the oxidation of L-malate, L-tartrate, D-tartrate, DL-isocitrate, or DL-lactate. The protein is 3-isopropylmalate/3-methylmalate dehydrogenase (leuB) of Methanocaldococcus jannaschii (strain ATCC 43067 / DSM 2661 / JAL-1 / JCM 10045 / NBRC 100440) (Methanococcus jannaschii).